Reading from the N-terminus, the 577-residue chain is NKAP family protein UM04995 (577 aa).

Positions 1–479 (MPTLAERLGS…YGGALLPGEG (479 aa)) are disordered. Residues 20-31 (KSSHDREQELRS) are compositionally biased toward basic and acidic residues. Polar residues predominate over residues 36-49 (SKQTSRNTAHQDLA). Residues 50–60 (SSERRSIDREL) show a composition bias toward basic and acidic residues. Over residues 70–89 (SPLSSPQNGSSPRRQRGSPS) the composition is skewed to low complexity. Basic and acidic residues-rich tracts occupy residues 127–163 (PRED…DSRR), 170–193 (SGDR…REAP), and 265–297 (DSSS…DKHH). Composition is skewed to basic residues over residues 298–316 (SSSR…RRSS) and 325–336 (SRHRHTRSSRSH). Acidic residues predominate over residues 340 to 350 (DDDDDDDEDVD). The span at 363–385 (KVSDGSDSGRSESETDSDSDARS) shows a compositional bias: basic and acidic residues. The span at 386–395 (SRHRRRHHKS) shows a compositional bias: basic residues. 2 stretches are compositionally biased toward basic and acidic residues: residues 396-408 (DRSS…ESEK) and 417-439 (SESE…RRDS). A coiled-coil region spans residues 529–570 (RKENQVISAEEKRTMLRLQAEEKAKKEREIVSQFKELVDTLQ).

It belongs to the NKAP family.

The chain is NKAP family protein UM04995 from Mycosarcoma maydis (Corn smut fungus).